We begin with the raw amino-acid sequence, 459 residues long: ERBB receptor feedback inhibitor 1 (459 aa).

S2 is subject to N-acetylserine. Phosphothreonine is present on residues T126 and T130. The tract at residues 227-352 (QNRVVPDPNP…VMPPTQSFAP (126 aa)) is disordered. Phosphoserine is present on residues S250 and S271. The span at 264–273 (SSCTHRASPS) shows a compositional bias: polar residues. Residues 282 to 291 (PPRVPIPPRP) are compositionally biased toward pro residues. Residue S300 is modified to Phosphoserine. A compositionally biased stretch (basic and acidic residues) spans 310-323 (DEDRPPKVPPREPL). A compositionally biased stretch (polar residues) spans 324-335 (SRSNSRTPSPKS). Positions 332 to 361 (SPKSLPSYLNGVMPPTQSFAPDPKYVSSKA) are interaction with EGFR and ERBB2 and regulation of EGFR activation. Phosphoserine is present on S458.

Belongs to the MIG6 family. Interacts with EGFR and ERBB2.

It localises to the cytoplasm. It is found in the cell membrane. The protein localises to the nucleus. In terms of biological role, negative regulator of EGFR signaling in skin morphogenesis. Acts as a negative regulator for several EGFR family members, including ERBB2, ERBB3 and ERBB4. Inhibits EGFR catalytic activity by interfering with its dimerization. Inhibits autophosphorylation of EGFR, ERBB2 and ERBB4. Important for normal keratinocyte proliferation and differentiation. Plays a role in modulating the response to steroid hormones in the uterus. Required for normal response to progesterone in the uterus and for fertility. Mediates epithelial estrogen responses in the uterus by regulating ESR1 levels and activation. Important for regulation of endometrium cell proliferation. Important for normal prenatal and perinatal lung development. This Rattus norvegicus (Rat) protein is ERBB receptor feedback inhibitor 1 (Errfi1).